The chain runs to 291 residues: Elongation factor Ts (291 aa).

The interval 79 to 82 (TDFV) is involved in Mg(2+) ion dislocation from EF-Tu.

It belongs to the EF-Ts family.

Its subcellular location is the cytoplasm. Associates with the EF-Tu.GDP complex and induces the exchange of GDP to GTP. It remains bound to the aminoacyl-tRNA.EF-Tu.GTP complex up to the GTP hydrolysis stage on the ribosome. The chain is Elongation factor Ts from Stenotrophomonas maltophilia (strain K279a).